A 485-amino-acid chain; its full sequence is Probable alginate O-acetylase AlgI (485 aa).

Transmembrane regions (helical) follow at residues 7-24, 39-61, 78-100, 115-137, 150-172, 312-334, 360-382, 402-424, and 461-483; these read VFLFLFLPIFLGLYYLSG, FYAWWRVDFLALFAGVTLWNYWI, WLLLGVGVDLAILGYFKYANFGV, FILTHVLLPIGISFYIFESISYI, NLIDFAAFVAIFPHLIAGPVLRF, FLTMLLGGLWHGANFTYIIWGAW, AFTFLLVVVGWVIFRAENLHVAA, AQLTGLQVATLVIAYLTLAFFGL, and ILLLFVASILKLSAQSYSPFLYF. His-322 is an active-site residue.

Belongs to the membrane-bound acyltransferase family.

It is found in the cell inner membrane. The protein operates within glycan biosynthesis; alginate biosynthesis. In terms of biological role, together with AlgJ and AlgF, forms an inner membrane complex which probably interacts with the alginate polymerization-transport complex and adds acetyl groups at the O-2 and O-3 positions of mannuronate residues. Acetylation of alginate is important for the architecture of biofilms and increases the ability of alginate to act as a defense barrier. This Pseudomonas putida (strain ATCC 47054 / DSM 6125 / CFBP 8728 / NCIMB 11950 / KT2440) protein is Probable alginate O-acetylase AlgI (algI).